Here is a 354-residue protein sequence, read N- to C-terminus: Uroporphyrinogen decarboxylase (354 aa).

Substrate is bound by residues 27-31 (RRAGR), Phe-46, Asp-77, Tyr-154, Thr-209, and His-327.

Belongs to the uroporphyrinogen decarboxylase family. Homodimer.

The protein localises to the cytoplasm. The catalysed reaction is uroporphyrinogen III + 4 H(+) = coproporphyrinogen III + 4 CO2. It functions in the pathway porphyrin-containing compound metabolism; protoporphyrin-IX biosynthesis; coproporphyrinogen-III from 5-aminolevulinate: step 4/4. Functionally, catalyzes the decarboxylation of four acetate groups of uroporphyrinogen-III to yield coproporphyrinogen-III. The protein is Uroporphyrinogen decarboxylase of Salmonella typhimurium (strain LT2 / SGSC1412 / ATCC 700720).